The primary structure comprises 458 residues: Argininosuccinate lyase (458 aa).

It belongs to the lyase 1 family. Argininosuccinate lyase subfamily.

It is found in the cytoplasm. The catalysed reaction is 2-(N(omega)-L-arginino)succinate = fumarate + L-arginine. Its pathway is amino-acid biosynthesis; L-arginine biosynthesis; L-arginine from L-ornithine and carbamoyl phosphate: step 3/3. In Hydrogenobaculum sp. (strain Y04AAS1), this protein is Argininosuccinate lyase.